Consider the following 133-residue polypeptide: Small ribosomal subunit protein uS8 (133 aa).

It belongs to the universal ribosomal protein uS8 family. Part of the 30S ribosomal subunit. Contacts proteins S5 and S12.

Its function is as follows. One of the primary rRNA binding proteins, it binds directly to 16S rRNA central domain where it helps coordinate assembly of the platform of the 30S subunit. The chain is Small ribosomal subunit protein uS8 from Prochlorococcus marinus (strain MIT 9301).